Here is a 173-residue protein sequence, read N- to C-terminus: Lens fiber membrane intrinsic protein (173 aa).

The Cytoplasmic segment spans residues 1-3 (MYS). The chain crosses the membrane as a helical span at residues 4–24 (FMGGGLFCAWVGTILLVVAMA). The Extracellular segment spans residues 25–66 (TDHWMQYRLSGSFAHQGLWRYCLGNKCYLQTDSIAYWNATRA). Trp43 and Trp61 each carry a C-linked (Man) tryptophan glycan. The N-linked (GlcNAc...) asparagine glycan is linked to Asn62. Residues 67–87 (FMILSALCAISGIIMGIMAFA) traverse the membrane as a helical segment. Over 88–98 (HQPTFSRISRP) the chain is Cytoplasmic. Residues 99–119 (FSAGIMFFSSTLFVVLALAIY) traverse the membrane as a helical segment. At 120–140 (TGVTVSFLGRRFGDWRFSWSY) the chain is on the extracellular side. Residues 141-161 (ILGWVAVLMTFFAGIFYMCAY) form a helical membrane-spanning segment. The Cytoplasmic portion of the chain corresponds to 162 to 173 (RVHECRRLSTPR). Ser170 carries the post-translational modification Phosphoserine. Thr171 bears the Phosphothreonine mark.

The protein belongs to the PMP-22/EMP/MP20 family. In terms of assembly, seems to be associated with itself or another lens membrane component via disulfide bonds. As to expression, eye lens specific.

It localises to the membrane. In terms of biological role, present in the thicker 16-17 nm junctions of mammalian lens fiber cells, where it may contribute to cell junctional organization. Acts as a receptor for calmodulin. May play an important role in both lens development and cataractogenesis. This Homo sapiens (Human) protein is Lens fiber membrane intrinsic protein (LIM2).